A 525-amino-acid chain; its full sequence is Keratin, type I cytoskeletal 24 (525 aa).

The disordered stretch occupies residues 1–30 (MSCSSRASSSRAGGSSSARVSAGGSSFSSG). A head region spans residues 1 to 139 (MSCSSRASSS…VGDGGLFSGG (139 aa)). The interval 140–175 (EKQTMQNLNDRLANYLDKVRALEEANTDLENKIKEW) is coil 1A. The IF rod domain occupies 140–456 (EKQTMQNLND…RLLDGEGGGS (317 aa)). Residues 176-198 (YDKYGPGSGDGGSGRDYSKYYSI) form a linker 1 region. The interval 199-290 (IEDLRNQIIA…KNHEEEMKNM (92 aa)) is coil 1B. Positions 291-313 (QGSSGGEVTVEMNAAPGTDLTKL) are linker 12. Residues 314–452 (LNDMRAQYEE…ETYRRLLDGE (139 aa)) are coil 2. The interval 453–525 (GGGSSFAEFG…VSSISEVKVK (73 aa)) is tail. The disordered stretch occupies residues 459-497 (AEFGGRNSGSVNMGSRDLVSGDSRSGSCSGQGRDSSKTR). The segment covering 480 to 491 (DSRSGSCSGQGR) has biased composition (polar residues).

Belongs to the intermediate filament family. Heterotetramer of two type I and two type II keratins. As to expression, highly expressed in keratinocytes, placenta, colon and spleen. Expressed at lower level in thymus and testis.

The sequence is that of Keratin, type I cytoskeletal 24 (KRT24) from Homo sapiens (Human).